The sequence spans 484 residues: Bifunctional protein GlmU (484 aa).

The segment at 1–240 (MSNPHSSAVI…HRELAGVNDR (240 aa)) is pyrophosphorylase. Residues 12–15 (LAAG), K26, Q83, and 88–89 (GT) each bind UDP-N-acetyl-alpha-D-glucosamine. Position 113 (D113) interacts with Mg(2+). 4 residues coordinate UDP-N-acetyl-alpha-D-glucosamine: G150, E165, N180, and N238. N238 is a Mg(2+) binding site. Positions 241–261 (VQLAQAGKILNQRLVEDAMRN) are linker. Residues 262–484 (GATIVDPDTT…QAHAHETKEG (223 aa)) are N-acetyltransferase. UDP-N-acetyl-alpha-D-glucosamine contacts are provided by R343 and K361. The active-site Proton acceptor is H373. Residues Y376 and N387 each contribute to the UDP-N-acetyl-alpha-D-glucosamine site. Acetyl-CoA-binding positions include A390, 396-397 (NY), S415, and A433. Positions 461–484 (EKNRPGTPAADAARQAHAHETKEG) are disordered.

In the N-terminal section; belongs to the N-acetylglucosamine-1-phosphate uridyltransferase family. The protein in the C-terminal section; belongs to the transferase hexapeptide repeat family. In terms of assembly, homotrimer. It depends on Mg(2+) as a cofactor.

The protein localises to the cytoplasm. It catalyses the reaction alpha-D-glucosamine 1-phosphate + acetyl-CoA = N-acetyl-alpha-D-glucosamine 1-phosphate + CoA + H(+). The catalysed reaction is N-acetyl-alpha-D-glucosamine 1-phosphate + UTP + H(+) = UDP-N-acetyl-alpha-D-glucosamine + diphosphate. It functions in the pathway nucleotide-sugar biosynthesis; UDP-N-acetyl-alpha-D-glucosamine biosynthesis; N-acetyl-alpha-D-glucosamine 1-phosphate from alpha-D-glucosamine 6-phosphate (route II): step 2/2. Its pathway is nucleotide-sugar biosynthesis; UDP-N-acetyl-alpha-D-glucosamine biosynthesis; UDP-N-acetyl-alpha-D-glucosamine from N-acetyl-alpha-D-glucosamine 1-phosphate: step 1/1. It participates in bacterial outer membrane biogenesis; LPS lipid A biosynthesis. Functionally, catalyzes the last two sequential reactions in the de novo biosynthetic pathway for UDP-N-acetylglucosamine (UDP-GlcNAc). The C-terminal domain catalyzes the transfer of acetyl group from acetyl coenzyme A to glucosamine-1-phosphate (GlcN-1-P) to produce N-acetylglucosamine-1-phosphate (GlcNAc-1-P), which is converted into UDP-GlcNAc by the transfer of uridine 5-monophosphate (from uridine 5-triphosphate), a reaction catalyzed by the N-terminal domain. This is Bifunctional protein GlmU from Corynebacterium diphtheriae (strain ATCC 700971 / NCTC 13129 / Biotype gravis).